The following is a 69-amino-acid chain: Small ribosomal subunit protein uS7 (69 aa).

Belongs to the universal ribosomal protein uS7 family. As to quaternary structure, part of the 30S ribosomal subunit.

Its function is as follows. One of the primary rRNA binding proteins, it binds directly to 16S rRNA where it nucleates assembly of the head domain of the 30S subunit. Is located at the subunit interface close to the decoding center. This is Small ribosomal subunit protein uS7 (rps7) from Methanococcoides methylutens.